We begin with the raw amino-acid sequence, 628 residues long: Serine/threonine-protein phosphatase 2A regulatory subunit psrA (628 aa).

Residues 1–22 (MKNDHINYQQNLSQSPILNSNK) show a composition bias toward polar residues. Disordered regions lie at residues 1–61 (MKND…QIPF), 500–558 (KKKQ…DKPS), and 577–628 (SSHR…YTFT). Composition is skewed to low complexity over residues 23-58 (NQTQQNQQQQQQQQQQNPQQQQQFQHQQVPQLSPQQ) and 524-547 (QINQNNNNNNNNINNNNNNNNNNN). The segment covering 600 to 618 (NNHTNHDSEIENEVKEDFR) has biased composition (basic and acidic residues).

It belongs to the phosphatase 2A regulatory subunit B56 family. PP2A consists of a trimeric holoenzyme, composed of a 37 kDa catalytic subunit (C subunit) and a 65 kDa constant regulatory subunit (A subunit), that associates with a variety of regulatory subunits (B subunit) such as phr2AB (B55) and psrA (B56 homolog). The trimer may partially dissociates into a core 'AC' dimer equally active compared to the trimer. Seems to play a role in proper anterior patterning (pstO and pstAB).

Its subcellular location is the cytoplasm. The protein resides in the cytosol. Involved in developmental cell fate decision. This chain is Serine/threonine-protein phosphatase 2A regulatory subunit psrA (psrA), found in Dictyostelium discoideum (Social amoeba).